Reading from the N-terminus, the 571-residue chain is Isthmin-2 (571 aa).

Positions 1–26 are cleaved as a signal peptide; the sequence is MRALRDRAGLLLCVLLLAALLEAALG. 3 disordered regions span residues 30–60, 116–141, and 257–294; these read KKPR…LKEE, ANTT…LREE, and EKDR…DEEE. The segment covering 116–131 has biased composition (polar residues); the sequence is ANTTLSTPNPDTQASA. Asn117 is a glycosylation site (N-linked (GlcNAc...) asparagine). Residues 257 to 268 show a composition bias toward basic and acidic residues; the sequence is EKDRAPGEKGEE. A compositionally biased stretch (acidic residues) spans 269–294; the sequence is KEEDEDYPSEDIEGEDQEDKEEDEEE. Asn300 is a glycosylation site (N-linked (GlcNAc...) asparagine). The TSP type-1 domain maps to 327–371; the sequence is EPQKEWSPWSPCSGNCSTGKQQRTRPCGYGCTATETRTCDLPSCP. 3 disulfides stabilise this stretch: Cys338/Cys365, Cys342/Cys370, and Cys353/Cys357. Asn392 carries N-linked (GlcNAc...) asparagine glycosylation. One can recognise an AMOP domain in the interval 396–559; sequence MHDQDVDSCE…RACTDNPLEE (164 aa).

The protein belongs to the isthmin family. As to expression, expressed at high levels in the placenta and at moderate levels in the pancreas, kidney, heart, liver, lung, brain and skeletal muscle.

It localises to the secreted. The sequence is that of Isthmin-2 (ISM2) from Homo sapiens (Human).